Consider the following 368-residue polypeptide: UPF0284 protein SYNPCC7002_A1742 (368 aa).

It belongs to the UPF0284 family.

The polypeptide is UPF0284 protein SYNPCC7002_A1742 (Picosynechococcus sp. (strain ATCC 27264 / PCC 7002 / PR-6) (Agmenellum quadruplicatum)).